The chain runs to 1678 residues: Nuclear pore complex protein Nup98-Nup96 (1678 aa).

The segment covering 1 to 11 (MFGQNKSFGSS) has biased composition (low complexity). 5 disordered regions span residues 1–41 (MFGQ…QPAN), 68–100 (SSIF…FGST), 301–366 (TTGS…GAPA), 441–473 (FGNT…TQAT), and 603–631 (SKEA…RSVH). Gly residues predominate over residues 12-22 (SFGGGSSGSGL). Composition is skewed to low complexity over residues 23–38 (FGQN…LFGQ) and 73–83 (SPQQPQNNQSS). The segment covering 306-329 (LFGNQQPQTNTGGSLFGNTQNQNQ) has biased composition (polar residues). Residues 345 to 366 (FGQAQQQPQQQSSGFSFGGAPA) are compositionally biased toward low complexity. Polar residues-rich tracts occupy residues 456-473 (SQPQ…TQAT) and 615-628 (RNST…LTNR). Positions 777–919 (KPDYFSLPTI…GSWVFRVDHF (143 aa)) constitute a Peptidase S59 domain. Ser-920 acts as the Nucleophile in catalysis.

Belongs to the nucleoporin GLFG family. Part of the NPC. In terms of processing, the Nup98 and Nup96 chains are autoproteolytically processed from a single precursor protein.

Its subcellular location is the cytoplasmic granule. It localises to the nucleus membrane. It is found in the nucleus. The protein resides in the nuclear pore complex. The protein localises to the nucleus envelope. Its subcellular location is the chromosome. Functionally, nup98 and Nup96 play a role in the bidirectional transport across the nucleoporin complex (NPC). Required for the nuclear import of hcp-4 during mitotic prophase, this step is essential for centrosome assembly and resolution. Regulates nucleoporin npp-5 localization to the nuclear membrane during interphase and to kinetochores during metaphase. Has a role in P granule integrity; may promote the 'liquid phase' of P granules by increasing the number of interacting RNA-protein complexes. Binds nos-2 mRNA, probably indirectly, and promotes its accumulation in P granules. This chain is Nuclear pore complex protein Nup98-Nup96, found in Caenorhabditis elegans.